The chain runs to 153 residues: Lipoprotein signal peptidase (153 aa).

The next 3 helical transmembrane spans lie at 11–31, 39–59, and 68–88; these read ILIL…SLFV, DCID…FAFL, and LVLV…CYAI. Active-site residues include aspartate 112 and aspartate 129. The chain crosses the membrane as a helical span at residues 122–142; sequence FAVFNFADVMIDVAVVWILLL.

This sequence belongs to the peptidase A8 family.

The protein localises to the cell inner membrane. The catalysed reaction is Release of signal peptides from bacterial membrane prolipoproteins. Hydrolyzes -Xaa-Yaa-Zaa-|-(S,diacylglyceryl)Cys-, in which Xaa is hydrophobic (preferably Leu), and Yaa (Ala or Ser) and Zaa (Gly or Ala) have small, neutral side chains.. Its pathway is protein modification; lipoprotein biosynthesis (signal peptide cleavage). This protein specifically catalyzes the removal of signal peptides from prolipoproteins. The chain is Lipoprotein signal peptidase from Sulfurimonas denitrificans (strain ATCC 33889 / DSM 1251) (Thiomicrospira denitrificans (strain ATCC 33889 / DSM 1251)).